The chain runs to 317 residues: MGQTPEDWGEKPPVALIAGPTASGKSDVAVRLALALKKHGRDAVVINADSAQVYADLRVLSARPSEDEMRGVPHELFGEWDGAEACSAAEWASRAKEEISKAHFTGAVPILVGGTGLYLRTLLEGIAPIPPIDAAIREAIRALPQDEARAALEREDPDASKRLAPADAARTARALEVVRSTGRTLSNWQQHKKGGIGDRVALHPLIMLPDRKWLYARCDRRFELMLDRGAASEVETLLARDLDPSLPVMRAIGVREIAAWLKGEIDRPQMIASGQQATRNYAKRQYTWFRHQPPPDWPRIETFDFKLERVFDGLFQY.

19-26 (GPTASGKS) contacts ATP. Residue 21-26 (TASGKS) participates in substrate binding. Positions 49–52 (DSAQ) are interaction with substrate tRNA.

Belongs to the IPP transferase family. Monomer. Mg(2+) serves as cofactor.

The catalysed reaction is adenosine(37) in tRNA + dimethylallyl diphosphate = N(6)-dimethylallyladenosine(37) in tRNA + diphosphate. Functionally, catalyzes the transfer of a dimethylallyl group onto the adenine at position 37 in tRNAs that read codons beginning with uridine, leading to the formation of N6-(dimethylallyl)adenosine (i(6)A). The sequence is that of tRNA dimethylallyltransferase from Erythrobacter litoralis (strain HTCC2594).